A 475-amino-acid polypeptide reads, in one-letter code: Sulfate adenylyltransferase subunit 1 (475 aa).

The tr-type G domain occupies 25–239 (KSLLRFLTCG…EVLETVEIQR (215 aa)). The G1 stretch occupies residues 34 to 41 (GSVDDGKS). 34 to 41 (GSVDDGKS) provides a ligand contact to GTP. Residues 92-96 (GITID) form a G2 region. The interval 113–116 (DTPG) is G3. GTP is bound by residues 113–117 (DTPGH) and 168–171 (NKMD). Positions 168–171 (NKMD) are G4. A G5 region spans residues 206 to 208 (SAL).

Belongs to the TRAFAC class translation factor GTPase superfamily. Classic translation factor GTPase family. CysN/NodQ subfamily. As to quaternary structure, heterodimer composed of CysD, the smaller subunit, and CysN.

The catalysed reaction is sulfate + ATP + H(+) = adenosine 5'-phosphosulfate + diphosphate. It participates in sulfur metabolism; hydrogen sulfide biosynthesis; sulfite from sulfate: step 1/3. With CysD forms the ATP sulfurylase (ATPS) that catalyzes the adenylation of sulfate producing adenosine 5'-phosphosulfate (APS) and diphosphate, the first enzymatic step in sulfur assimilation pathway. APS synthesis involves the formation of a high-energy phosphoric-sulfuric acid anhydride bond driven by GTP hydrolysis by CysN coupled to ATP hydrolysis by CysD. The polypeptide is Sulfate adenylyltransferase subunit 1 (Shigella flexneri serotype 5b (strain 8401)).